Consider the following 298-residue polypeptide: Lipoyl synthase (298 aa).

[4Fe-4S] cluster is bound by residues cysteine 40, cysteine 45, cysteine 51, cysteine 67, cysteine 71, cysteine 74, and serine 280. Residues 53 to 269 (AVRRTATFMI…KEIALSKGFT (217 aa)) enclose the Radical SAM core domain.

It belongs to the radical SAM superfamily. Lipoyl synthase family. [4Fe-4S] cluster is required as a cofactor.

The protein localises to the cytoplasm. It carries out the reaction [[Fe-S] cluster scaffold protein carrying a second [4Fe-4S](2+) cluster] + N(6)-octanoyl-L-lysyl-[protein] + 2 oxidized [2Fe-2S]-[ferredoxin] + 2 S-adenosyl-L-methionine + 4 H(+) = [[Fe-S] cluster scaffold protein] + N(6)-[(R)-dihydrolipoyl]-L-lysyl-[protein] + 4 Fe(3+) + 2 hydrogen sulfide + 2 5'-deoxyadenosine + 2 L-methionine + 2 reduced [2Fe-2S]-[ferredoxin]. It participates in protein modification; protein lipoylation via endogenous pathway; protein N(6)-(lipoyl)lysine from octanoyl-[acyl-carrier-protein]. Its function is as follows. Catalyzes the radical-mediated insertion of two sulfur atoms into the C-6 and C-8 positions of the octanoyl moiety bound to the lipoyl domains of lipoate-dependent enzymes, thereby converting the octanoylated domains into lipoylated derivatives. This Geobacillus sp. (strain WCH70) protein is Lipoyl synthase.